The primary structure comprises 454 residues: Tetrahydroanabasine acetyltransferase (454 aa).

Catalysis depends on proton acceptor residues H164 and D389.

The protein belongs to the plant acyltransferase family. Monomer.

The enzyme catalyses tetrahydroanabasine + acetyl-CoA = ammodendrine + CoA. It participates in alkaloid biosynthesis. Functionally, tetrahydroanabasine acetyltransferase involved in the accumulation of quinolizidine type antinutritional alkaloids (QAs) natural products. QAs impart a bitter taste to plants, acting as repellents and toxicants for herbivores and predators, and possess a variety of pharmacological effects, including sedative, anticonvulsant, anti-inflammatory, antiviral, antitumor, antipyretic, anti-hepatitis B, antifibrotic, antiallergic, antidiarrheal, analgesic and antimicrobial activities. Mediates the conversion of tetrahydroanabasine into ammodendrine. This is Tetrahydroanabasine acetyltransferase from Lupinus albus (White lupine).